A 436-amino-acid polypeptide reads, in one-letter code: 3-ketoacyl-CoA thiolase (436 aa).

Catalysis depends on cysteine 99, which acts as the Acyl-thioester intermediate. Catalysis depends on proton acceptor residues histidine 392 and cysteine 422.

It belongs to the thiolase-like superfamily. Thiolase family. In terms of assembly, heterotetramer of two alpha chains (FadJ) and two beta chains (FadI).

It is found in the cytoplasm. It carries out the reaction an acyl-CoA + acetyl-CoA = a 3-oxoacyl-CoA + CoA. It functions in the pathway lipid metabolism; fatty acid beta-oxidation. Functionally, catalyzes the final step of fatty acid oxidation in which acetyl-CoA is released and the CoA ester of a fatty acid two carbons shorter is formed. The chain is 3-ketoacyl-CoA thiolase from Salmonella paratyphi C (strain RKS4594).